A 396-amino-acid polypeptide reads, in one-letter code: L-lactate dehydrogenase (396 aa).

One can recognise an FMN hydroxy acid dehydrogenase domain in the interval 1–380; it reads MIISAASDYR…SGDSLVQELG (380 aa). Substrate is bound at residue tyrosine 24. FMN is bound by residues serine 106 and glutamine 127. Tyrosine 129 serves as a coordination point for substrate. Threonine 155 provides a ligand contact to FMN. Arginine 164 serves as a coordination point for substrate. Position 251 (lysine 251) interacts with FMN. Catalysis depends on histidine 275, which acts as the Proton acceptor. Arginine 278 lines the substrate pocket. 306-330 lines the FMN pocket; that stretch reads DSGIRNGLDVVRMIALGADTVLLGR.

Belongs to the FMN-dependent alpha-hydroxy acid dehydrogenase family. FMN is required as a cofactor.

The protein resides in the cell inner membrane. It catalyses the reaction (S)-lactate + A = pyruvate + AH2. In terms of biological role, catalyzes the conversion of L-lactate to pyruvate. Is coupled to the respiratory chain. This chain is L-lactate dehydrogenase, found in Salmonella heidelberg (strain SL476).